The chain runs to 183 residues: Probable calcium-binding protein CML47 (183 aa).

EF-hand domains follow at residues 112–147 and 149–183; these read MGKEIVKEAFRLFDENQDGFIDENELKHVLSLLGYD and CTKMECRKMVKVYDENRDGKIDFYEFVKLIEKSFS. Residues D125, N127, D129, E136, D162, N164, D166, K168, and E173 each coordinate Ca(2+).

Its function is as follows. Potential calcium sensor. The sequence is that of Probable calcium-binding protein CML47 (CML47) from Arabidopsis thaliana (Mouse-ear cress).